A 488-amino-acid polypeptide reads, in one-letter code: Probable malate:quinone oxidoreductase (488 aa).

This sequence belongs to the MQO family. The cofactor is FAD.

The enzyme catalyses (S)-malate + a quinone = a quinol + oxaloacetate. The protein operates within carbohydrate metabolism; tricarboxylic acid cycle; oxaloacetate from (S)-malate (quinone route): step 1/1. This chain is Probable malate:quinone oxidoreductase, found in Neisseria meningitidis serogroup B (strain ATCC BAA-335 / MC58).